The sequence spans 481 residues: Chromosomal replication initiator protein DnaA (481 aa).

The domain I, interacts with DnaA modulators stretch occupies residues M1–R71. The tract at residues R71–T143 is domain II. Positions A86–S96 are enriched in low complexity. Residues A86–T110 are disordered. Residues R144 to S361 form a domain III, AAA+ region region. ATP is bound by residues G189, G191, K192, and T193. The segment at R362–N481 is domain IV, binds dsDNA.

It belongs to the DnaA family. As to quaternary structure, oligomerizes as a right-handed, spiral filament on DNA at oriC.

It localises to the cytoplasm. Plays an essential role in the initiation and regulation of chromosomal replication. ATP-DnaA binds to the origin of replication (oriC) to initiate formation of the DNA replication initiation complex once per cell cycle. Binds the DnaA box (a 9 base pair repeat at the origin) and separates the double-stranded (ds)DNA. Forms a right-handed helical filament on oriC DNA; dsDNA binds to the exterior of the filament while single-stranded (ss)DNA is stabiized in the filament's interior. The ATP-DnaA-oriC complex binds and stabilizes one strand of the AT-rich DNA unwinding element (DUE), permitting loading of DNA polymerase. After initiation quickly degrades to an ADP-DnaA complex that is not apt for DNA replication. Binds acidic phospholipids. The protein is Chromosomal replication initiator protein DnaA of Laribacter hongkongensis (strain HLHK9).